The chain runs to 161 residues: uncharacterized protein (161 aa).

The signal sequence occupies residues 1-27; it reads MKKIGLLFMLCLAALFTIGFPAQQADA.

Its subcellular location is the secreted. This is an uncharacterized protein from Bacillus subtilis (strain 168).